A 123-amino-acid polypeptide reads, in one-letter code: RxLR effector protein Avh262 (123 aa).

The signal sequence occupies residues Met1–Ala18. Residues Val24–Asn46 form a disordered region. A RxLR-dEER motif is present at residues Arg30–Arg50. A compositionally biased stretch (basic and acidic residues) spans Lys34–Asn46. The biP-binding stretch occupies residues Leu60–Thr82.

Belongs to the RxLR effector family. As to quaternary structure, interacts with host plant ER-luminal binding immunoglobulin proteins (BiPs) such as soybean BiP1, BiP2, BiP3 and BiP4.

The protein localises to the secreted. It localises to the host endoplasmic reticulum. Its function is as follows. Effector that suppresses plant defense responses during the early stages of pathogen infection. Suppresses cell death induced by effectors and PAMPs in plant hosts. Avh262 stabilizes endoplasmic reticulum (ER)-luminal binding immunoglobulin proteins (BiPs), which act as negative regulators of plant resistance to Phytophthora. By stabilizing BiPs, Avh262 suppresses ER stress-triggered cell death and facilitates Phytophthora infection. The chain is RxLR effector protein Avh262 from Phytophthora sojae (Soybean stem and root rot agent).